A 330-amino-acid polypeptide reads, in one-letter code: Probable allantoicase (330 aa).

The protein belongs to the allantoicase family.

It carries out the reaction allantoate + H2O = (S)-ureidoglycolate + urea. It participates in nitrogen metabolism; (S)-allantoin degradation; (S)-ureidoglycolate from allantoate (aminidohydrolase route): step 1/1. The chain is Probable allantoicase from Photobacterium profundum (strain SS9).